The chain runs to 593 residues: MGPLWALRVAGALSVAGVLAGHDGSQRAGQPAALDAGTRGDGVGHDRGVDCREVRKRNSSERCRFVRGTPDCRLDGGFLDYLGGAFCTFPSSLLPLSVSLYALWLLYLFVILGVTAEKFFCPNLSAISTNLKLSHNGLGVVGHSLTPALHGVTFLAFGNGAPDIFSAVVAFSDPRTAGLAVGAIFGAGIFVTTVVAGGIALVKPFAAASRPFLRDVIFYMVAVFLTFLVLYFGYITLGEALGYLGLYVFYVFTVVLCTWIHRWQRGDGPPPPGPWEPAIPTDAEEQESSGTNCGDYGEEYRPLLPYHETSLHILSTALSPLDKHKWRRKPWYWRLFKVLKVPVELVLLLTVPVVDPDKDDLNWKRPLNCLHIVTGPLLCIFTLKSGAYGLYQIQGVFPVWALVALAGSVLAIIVFVTTHNEEPPKYHCVFAFLGFLSSAMWINAAATELVNILRTLGIIFELSNTVLGLTLLAWGNSIGDTFSDLTMARQGYPRMAFSACFGGIIFNILVGVGLGCLLQMTNSQMVVKLEPDSLLVWILAGALGLSLVFSFVAVPAQCFQLGKAYGTCLILYYLVFLCVALLTEFRVIHLAAT.

Residues 1–20 (MGPLWALRVAGALSVAGVLA) form the signal peptide. The Extracellular portion of the chain corresponds to 21–93 (GHDGSQRAGQ…GAFCTFPSSL (73 aa)). An N-linked (GlcNAc...) asparagine glycan is attached at Asn-58. A helical membrane pass occupies residues 94–114 (LPLSVSLYALWLLYLFVILGV). Residues 115 to 135 (TAEKFFCPNLSAISTNLKLSH) are Cytoplasmic-facing. A helical transmembrane segment spans residues 136–158 (NGLGVVGHSLTPALHGVTFLAFG). Residues 159–178 (NGAPDIFSAVVAFSDPRTAG) are Extracellular-facing. Residues 179-199 (LAVGAIFGAGIFVTTVVAGGI) traverse the membrane as a helical segment. Over 200–215 (ALVKPFAAASRPFLRD) the chain is Cytoplasmic. The chain crosses the membrane as a helical span at residues 216–236 (VIFYMVAVFLTFLVLYFGYIT). Residues 237–239 (LGE) are Extracellular-facing. A helical membrane pass occupies residues 240-260 (ALGYLGLYVFYVFTVVLCTWI). The Cytoplasmic portion of the chain corresponds to 261-334 (HRWQRGDGPP…KWRRKPWYWR (74 aa)). Residues 268 to 277 (GPPPPGPWEP) show a composition bias toward pro residues. The disordered stretch occupies residues 268 to 291 (GPPPPGPWEPAIPTDAEEQESSGT). Residues 335–355 (LFKVLKVPVELVLLLTVPVVD) form a helical membrane-spanning segment. Over 356–369 (PDKDDLNWKRPLNC) the chain is Extracellular. A helical membrane pass occupies residues 370-390 (LHIVTGPLLCIFTLKSGAYGL). Topologically, residues 391-395 (YQIQG) are cytoplasmic. Residues 396 to 416 (VFPVWALVALAGSVLAIIVFV) form a helical membrane-spanning segment. At 417–428 (TTHNEEPPKYHC) the chain is on the extracellular side. The chain crosses the membrane as a helical span at residues 429–449 (VFAFLGFLSSAMWINAAATEL). Residues 450–454 (VNILR) are Cytoplasmic-facing. Residues 455–475 (TLGIIFELSNTVLGLTLLAWG) traverse the membrane as a helical segment. Topologically, residues 476–496 (NSIGDTFSDLTMARQGYPRMA) are extracellular. The helical transmembrane segment at 497-517 (FSACFGGIIFNILVGVGLGCL) threads the bilayer. At 518–533 (LQMTNSQMVVKLEPDS) the chain is on the cytoplasmic side. A helical transmembrane segment spans residues 534-554 (LLVWILAGALGLSLVFSFVAV). At 555 to 564 (PAQCFQLGKA) the chain is on the extracellular side. Residues 565–585 (YGTCLILYYLVFLCVALLTEF) traverse the membrane as a helical segment. The Cytoplasmic portion of the chain corresponds to 586–593 (RVIHLAAT).

The protein belongs to the Ca(2+):cation antiporter (CaCA) (TC 2.A.19) family. SLC24A subfamily.

Its subcellular location is the mitochondrion inner membrane. It carries out the reaction Ca(2+)(in) + 3 Na(+)(out) = Ca(2+)(out) + 3 Na(+)(in). In terms of biological role, mitochondrial sodium/calcium antiporter that mediates sodium-dependent calcium efflux from mitochondrion, by mediating the exchange of 3 sodium ions per 1 calcium ion. Plays a central role in mitochondrial calcium homeostasis by mediating mitochondrial calcium extrusion: calcium efflux is essential for mitochondrial function and cell survival, notably in cardiomyocytes. Involved in B-lymphocyte chemotaxis. The polypeptide is Mitochondrial sodium/calcium exchanger protein (Gallus gallus (Chicken)).